The primary structure comprises 374 residues: Nudix hydrolase 20, chloroplastic (374 aa).

A chloroplast-targeting transit peptide spans 1–49 (MASGFCSLALTVTTSLFSSHAITRRVLPILRWRSSSMSLSPLRHSRALS). The 142-residue stretch at 205–346 (GYGVHMNGYV…KANCSLVIID (142 aa)) folds into the Nudix hydrolase domain. The Nudix box motif lies at 244–265 (GGLPHGISCGGNLVKECEEEAG). Mg(2+)-binding residues include glutamate 259 and glutamate 263.

Belongs to the Nudix hydrolase family. Requires Mg(2+) as cofactor. The cofactor is Mn(2+). As to expression, expressed in leaves and inflorescences.

The protein localises to the plastid. It localises to the chloroplast. Its function is as follows. Probably mediates the hydrolysis of some nucleoside diphosphate derivatives. This is Nudix hydrolase 20, chloroplastic (NUDT20) from Arabidopsis thaliana (Mouse-ear cress).